Consider the following 129-residue polypeptide: Small ribosomal subunit protein uS11 (129 aa).

Belongs to the universal ribosomal protein uS11 family. As to quaternary structure, part of the 30S ribosomal subunit. Interacts with proteins S7 and S18. Binds to IF-3.

In terms of biological role, located on the platform of the 30S subunit, it bridges several disparate RNA helices of the 16S rRNA. Forms part of the Shine-Dalgarno cleft in the 70S ribosome. This is Small ribosomal subunit protein uS11 from Vibrio campbellii (strain ATCC BAA-1116).